A 76-amino-acid chain; its full sequence is Neuromacin-like protein (76 aa).

Disulfide bonds link C18–C25, C40–C44, C54–C61, and C72–C74.

The protein belongs to the macin family.

It is found in the secreted. This is Neuromacin-like protein from Aplysia californica (California sea hare).